Here is a 534-residue protein sequence, read N- to C-terminus: Dolichol kinase (534 aa).

At 1 to 16 (MTRQCPPQESGAALSG) the chain is on the cytoplasmic side. The chain crosses the membrane as a helical span at residues 17–37 (SVLAEAAVVFAVVLSIHAAVW). The Extracellular portion of the chain corresponds to 38-72 (DRYSWCAVALAVQAFYVQYKWDRLLQQGNAVFQFR). A helical transmembrane segment spans residues 73–93 (MSANSGLLPASMVMPLLGLVM). The Cytoplasmic portion of the chain corresponds to 94–109 (KERCQTAGNPYFERFG). The chain crosses the membrane as a helical span at residues 110 to 130 (IVVAATGMAVALFSSVLALGI). The Extracellular portion of the chain corresponds to 131–132 (TR). The helical transmembrane segment at 133–153 (PVPTNTCAISGLAGGVIIYIM) threads the bilayer. At 154-161 (RHSLSVGE) the chain is on the cytoplasmic side. Residues 162–182 (VIEVLEVLLIFVYLNMILLYL) form a helical membrane-spanning segment. The Extracellular portion of the chain corresponds to 183–186 (LPRC). A helical membrane pass occupies residues 187-207 (FTPGEALLVLGGISFVLNQLI). At 208 to 220 (KRSLTESQGDPVD) the chain is on the cytoplasmic side. The chain crosses the membrane as a helical span at residues 221 to 241 (FFLLVVVVGMVLMGVFFSTLF). The Extracellular segment spans residues 242–252 (VFMDSGTWASS). The chain crosses the membrane as a helical span at residues 253–273 (IFFHLMTCVLGLGVVLPWLHW). Topologically, residues 274–293 (LIRRNPLLWLLQFLFYTETR) are cytoplasmic. Residues 294-314 (IYLLAYWSLLASVACLVVLYQ) traverse the membrane as a helical segment. Over 315 to 333 (NAKRSSSESKKHRAPTITR) the chain is Extracellular. Residues 334 to 350 (KYFHFIVVATYIPGIIF) traverse the membrane as a helical segment. Residues 351 to 355 (DRPLL) lie on the Cytoplasmic side of the membrane. A helical membrane pass occupies residues 356–376 (YVAATVCLAVFIFLEYVRYFR). Over 377 to 397 (IKPLGHTLRSLLSLFLDERDS) the chain is Extracellular. The helical transmembrane segment at 398–418 (GPLILTHIYLLLGMSLPIWLI) threads the bilayer. Residues 419–432 (PRPCTQKDSLEGAR) lie on the Cytoplasmic side of the membrane. A helical membrane pass occupies residues 433–453 (ALVPYAGVLAVGVGDTVASIF). Residues 454-468 (GSTMGEIRWPGTKKT) lie on the Extracellular side of the membrane. Residues 455-470 (STMGEIRWPGTKKTFE) are CTP-binding. Residues 469 to 489 (FEGTMTSIFAQIISVALILIF) traverse the membrane as a helical segment. Residues 490 to 491 (DS) lie on the Cytoplasmic side of the membrane. A helical transmembrane segment spans residues 492 to 512 (GVDLNYSYAWILGSISTVSLL). At 513–534 (EAYTTQIDNLLLPLYLLILLMA) the chain is on the extracellular side.

Belongs to the polyprenol kinase family.

It is found in the endoplasmic reticulum membrane. It catalyses the reaction a di-trans,poly-cis-dolichol + CTP = a di-trans,poly-cis-dolichyl phosphate + CDP + H(+). Its pathway is protein modification; protein glycosylation. Functionally, catalyzes CTP-mediated phosphorylation of dolichol, the terminal step in de novo dolichyl monophosphate (Dol-P) biosynthesis. Dol-P is a lipid carrier essential for the synthesis of N-linked and O-linked oligosaccharides and for GPI anchors. In Mus musculus (Mouse), this protein is Dolichol kinase.